A 512-amino-acid polypeptide reads, in one-letter code: MGNIFSVANFKEPTTVEDCDSTWNTDSGGEEEQQEAEEEEESEGTEQREDDNEEEVIKQEETNEGGEEETGTETLIAEVKAVIHNPEQGDSSTVEQNIKPKRSFYAARDLYKYRHQYPQNIKDLRSPNDLCNLRFYMNKIPFKPDGVNIEEILNKWKGDYEKLEHNHTYIQWLFPLREQGLNFYAKELTSYEIEEFKKTKEAVKRFIVAYKMMLDFFGIELSDKNGNVSRAPNCQERFQHLNESQHNYLRITRILKSLGELGYENFKPPLVKLFLQESIVANTIPNMKQSALEYFVYTIKDRRQRRKLLRFACYHYEPPEHFIWGPPDKQKADENKATKKTTTPSSQKKHSHVEKKSRPAKSIKAPESPAVQHDEEKGTETMQTAEIHRQATAEVISVNETEVCDDGTVTSENNSSKTGQTEACDDGTVTAEDSSSKAEETDSGNSETRSLDTEHDLKRPEADRETCCKENIVVVEYTEKESKDCLCSLSPGTSNSNVTELKVEGSETGPFT.

Disordered stretches follow at residues 1–72 (MGNI…ETGT), 323–469 (IWGP…TCCK), and 488–512 (SLSPGTSNSNVTELKVEGSETGPFT). Acidic residues-rich tracts occupy residues 28 to 54 (GGEEEQQEAEEEEESEGTEQREDDNEE) and 62 to 71 (TNEGGEEETG). A compositionally biased stretch (basic and acidic residues) spans 328–337 (DKQKADENKA). Residues 347 to 361 (QKKHSHVEKKSRPAK) show a composition bias toward basic residues. The span at 408–421 (TVTSENNSSKTGQT) shows a compositional bias: polar residues. Positions 449–468 (RSLDTEHDLKRPEADRETCC) are enriched in basic and acidic residues. Residues 490 to 499 (SPGTSNSNVT) are compositionally biased toward polar residues.

The protein belongs to the opioid growth factor receptor family.

The polypeptide is Opioid growth factor receptor-like protein 1 (ogfrl1) (Xenopus tropicalis (Western clawed frog)).